We begin with the raw amino-acid sequence, 160 residues long: Bursicon (160 aa).

A signal peptide spans 1–20; the sequence is MSVLNTFLVIVALILCYVND. Residues 38 to 131 form the CTCK domain; that stretch reads CQECQMTAVI…PLQCMCRPCG (94 aa). Intrachain disulfides connect C41/C90, C55/C104, C65/C125, C69/C127, and C87/C130.

Heterodimer of burs and pburs.

It is found in the secreted. Functionally, final heterodimeric neurohormone released at the end of the molting cycle, involved in the sclerotization (tanning) of the insect cuticle, melanization and wing spreading. The protein is Bursicon of Bombyx mori (Silk moth).